Here is an 80-residue protein sequence, read N- to C-terminus: Teretoxin Tan6.1 (80 aa).

An N-terminal signal peptide occupies residues 1–21 (MATSGRLLCLCLVLGLVFESL). A propeptide spanning residues 22–34 (GHPGARLPKDGKR) is cleaved from the precursor.

The protein belongs to the teretoxin M (TM) superfamily. Contains 3 disulfide bonds. In terms of tissue distribution, expressed by the venom duct.

It is found in the secreted. The chain is Teretoxin Tan6.1 from Terebra anilis (Auger snail).